Here is a 366-residue protein sequence, read N- to C-terminus: Transcription factor MYB28 (366 aa).

HTH myb-type domains lie at 9 to 61 (GEGL…TNYL) and 62 to 116 (KPEI…KKRL). 2 DNA-binding regions (H-T-H motif) span residues 37-61 (WRDIPQKAGLKRCGKSCRLRWTNYL) and 89-112 (WSVIARHLPRRTDNEIKNYWNTHL). The tract at residues 124-170 (VTHKPLASSSNPTVDENLNSPNASSSDKQYSRSSSMPFLSRPPPSSC) is disordered. Residues 130–146 (ASSSNPTVDENLNSPNA) are compositionally biased toward polar residues. The span at 147–158 (SSSDKQYSRSSS) shows a compositional bias: low complexity.

As to quaternary structure, can form complexes with MYC2, MYC3 or MYC4. In terms of tissue distribution, expressed in generative organs, mature leaves and trichomes.

Its subcellular location is the nucleus. Its function is as follows. Major regulator of short-chained aliphatic glucosinolates (GLSs) biosynthesis. Together with MYB29/HAG3 and MYB76/HAG2, promotes aliphatic glucosinolate biosynthesis but represses indolic glucosinolate biosynthesis. Prevents insect performance (e.g. lepidopteran insect Mamestra brassicae and Spodoptera exigua) by promoting glucosinolates. The polypeptide is Transcription factor MYB28 (MYB28) (Arabidopsis thaliana (Mouse-ear cress)).